We begin with the raw amino-acid sequence, 244 residues long: Ribosomal RNA small subunit methyltransferase G (244 aa).

S-adenosyl-L-methionine is bound by residues Gly84, Phe89, 107-109, 135-136, and Arg154; these read DST and AE.

The protein belongs to the methyltransferase superfamily. RNA methyltransferase RsmG family.

It localises to the cytoplasm. Functionally, specifically methylates the N7 position of a guanine in 16S rRNA. This chain is Ribosomal RNA small subunit methyltransferase G, found in Nostoc punctiforme (strain ATCC 29133 / PCC 73102).